We begin with the raw amino-acid sequence, 89 residues long: Small ribosomal subunit protein uS14A (89 aa).

Belongs to the universal ribosomal protein uS14 family. Part of the 30S ribosomal subunit. Contacts proteins S3 and S10.

In terms of biological role, binds 16S rRNA, required for the assembly of 30S particles and may also be responsible for determining the conformation of the 16S rRNA at the A site. This chain is Small ribosomal subunit protein uS14A, found in Streptococcus agalactiae serotype Ia (strain ATCC 27591 / A909 / CDC SS700).